Here is a 466-residue protein sequence, read N- to C-terminus: ATP synthase subunit beta (466 aa).

156 to 163 (GGAGVGKT) lines the ATP pocket.

Belongs to the ATPase alpha/beta chains family. As to quaternary structure, F-type ATPases have 2 components, CF(1) - the catalytic core - and CF(0) - the membrane proton channel. CF(1) has five subunits: alpha(3), beta(3), gamma(1), delta(1), epsilon(1). CF(0) has three main subunits: a(1), b(2) and c(9-12). The alpha and beta chains form an alternating ring which encloses part of the gamma chain. CF(1) is attached to CF(0) by a central stalk formed by the gamma and epsilon chains, while a peripheral stalk is formed by the delta and b chains.

It localises to the cell membrane. It catalyses the reaction ATP + H2O + 4 H(+)(in) = ADP + phosphate + 5 H(+)(out). In terms of biological role, produces ATP from ADP in the presence of a proton gradient across the membrane. The catalytic sites are hosted primarily by the beta subunits. This is ATP synthase subunit beta from Polynucleobacter asymbioticus (strain DSM 18221 / CIP 109841 / QLW-P1DMWA-1) (Polynucleobacter necessarius subsp. asymbioticus).